Reading from the N-terminus, the 496-residue chain is Beta-amylase (496 aa).

Positions 54, 94, and 102 each coordinate substrate. Glu-187 (proton donor) is an active-site residue. Residues Lys-296, His-301, and Thr-343 each contribute to the substrate site. The active-site Proton acceptor is the Glu-381. Residues 382–383 (NA) and Arg-421 contribute to the substrate site. Residues 455–496 (YNHGIPPLKRSGPKIPDDVLNEATKPIPPFPWDSETDMKVDG) form a disordered region.

Belongs to the glycosyl hydrolase 14 family.

The enzyme catalyses Hydrolysis of (1-&gt;4)-alpha-D-glucosidic linkages in polysaccharides so as to remove successive maltose units from the non-reducing ends of the chains.. This chain is Beta-amylase (BMY1), found in Medicago sativa (Alfalfa).